The primary structure comprises 363 residues: Phosphoserine aminotransferase (363 aa).

L-glutamate is bound by residues serine 9 and arginine 42. Residues 76–77 (AR), tryptophan 102, threonine 154, aspartate 174, and glutamine 197 contribute to the pyridoxal 5'-phosphate site. Position 198 is an N6-(pyridoxal phosphate)lysine (lysine 198). 240 to 241 (NT) contributes to the pyridoxal 5'-phosphate binding site.

It belongs to the class-V pyridoxal-phosphate-dependent aminotransferase family. SerC subfamily. Homodimer. The cofactor is pyridoxal 5'-phosphate.

Its subcellular location is the cytoplasm. The catalysed reaction is O-phospho-L-serine + 2-oxoglutarate = 3-phosphooxypyruvate + L-glutamate. The enzyme catalyses 4-(phosphooxy)-L-threonine + 2-oxoglutarate = (R)-3-hydroxy-2-oxo-4-phosphooxybutanoate + L-glutamate. Its pathway is amino-acid biosynthesis; L-serine biosynthesis; L-serine from 3-phospho-D-glycerate: step 2/3. It functions in the pathway cofactor biosynthesis; pyridoxine 5'-phosphate biosynthesis; pyridoxine 5'-phosphate from D-erythrose 4-phosphate: step 3/5. In terms of biological role, catalyzes the reversible conversion of 3-phosphohydroxypyruvate to phosphoserine and of 3-hydroxy-2-oxo-4-phosphonooxybutanoate to phosphohydroxythreonine. The chain is Phosphoserine aminotransferase from Baumannia cicadellinicola subsp. Homalodisca coagulata.